We begin with the raw amino-acid sequence, 248 residues long: NAD-dependent protein deacylase 2 (248 aa).

Residues 1-248 (MLQAASALRH…HVMAELISHI (248 aa)) enclose the Deacetylase sirtuin-type domain. NAD(+) contacts are provided by residues 19–38 (GAGL…GGLY) and 102–105 (QNVD). Residue His-122 is the Proton acceptor of the active site. Cys-130, Cys-133, Cys-152, and Cys-155 together coordinate Zn(2+). Residues 193–195 (GTT), 219–221 (NPQ), and Ala-237 contribute to the NAD(+) site.

This sequence belongs to the sirtuin family. Class III subfamily. Zn(2+) serves as cofactor.

It localises to the cytoplasm. The catalysed reaction is N(6)-acetyl-L-lysyl-[protein] + NAD(+) + H2O = 2''-O-acetyl-ADP-D-ribose + nicotinamide + L-lysyl-[protein]. In terms of biological role, NAD-dependent protein deacetylase which modulates the activities of several proteins which are inactive in their acetylated form. In Pseudomonas syringae pv. tomato (strain ATCC BAA-871 / DC3000), this protein is NAD-dependent protein deacylase 2 (cobB2).